The chain runs to 254 residues: 5-oxoprolinase subunit A (254 aa).

This sequence belongs to the LamB/PxpA family. As to quaternary structure, forms a complex composed of PxpA, PxpB and PxpC.

It catalyses the reaction 5-oxo-L-proline + ATP + 2 H2O = L-glutamate + ADP + phosphate + H(+). Functionally, catalyzes the cleavage of 5-oxoproline to form L-glutamate coupled to the hydrolysis of ATP to ADP and inorganic phosphate. In Acinetobacter baylyi (strain ATCC 33305 / BD413 / ADP1), this protein is 5-oxoprolinase subunit A.